A 138-amino-acid chain; its full sequence is Protein X (138 aa).

Positions 24-48 are disordered; the sequence is ESGGPAVSRPSAGSASRADSPLPSA. The segment at 68–113 is mitochondrial targeting sequence; the sequence is PCCLGFTCAEFGAMVSTMNFVTWHAKRQLGMPTKDLWTPYVRNQLL.

It belongs to the orthohepadnavirus protein X family. As to quaternary structure, may form homodimer. May interact with host CEBPA, CFLAR, CREB1, DDB1, E4F1, HBXIP, HSPD1/HSP60, NFKBIA, POLR2E and SMAD4. Interacts with host SMC5-SMC6 complex and induces its degradation. Interacts with host TRPC4AP; leading to prevent ubiquitination of TRPC4AP. Interacts with host PLSCR1; this interaction promotes ubiquitination and degradation of HBx and impairs HBx-mediated cell proliferation. A fraction may be phosphorylated in insect cells and HepG2 cells, a human hepatoblastoma cell line. Phosphorylated in vitro by host protein kinase C or mitogen-activated protein kinase. N-acetylated in insect cells.

Its subcellular location is the host cytoplasm. It is found in the host nucleus. The protein resides in the host mitochondrion. In terms of biological role, multifunctional protein that plays a role in silencing host antiviral defenses and promoting viral transcription. Does not seem to be essential for HBV infection. May be directly involved in development of cirrhosis and liver cancer (hepatocellular carcinoma). Most of cytosolic activities involve modulation of cytosolic calcium. The effect on apoptosis is controversial depending on the cell types in which the studies have been conducted. May induce apoptosis by localizing in mitochondria and causing loss of mitochondrial membrane potential. May also modulate apoptosis by binding host CFLAR, a key regulator of the death-inducing signaling complex (DISC). Promotes viral transcription by using the host E3 ubiquitin ligase DDB1 to target the SMC5-SMC6 complex to proteasomal degradation. This host complex would otherwise bind to viral episomal DNA, and prevents its transcription. Moderately stimulates transcription of many different viral and cellular transcription elements. Promoters and enhancers stimulated by HBx contain DNA binding sites for NF-kappa-B, AP-1, AP-2, c-EBP, ATF/CREB, or the calcium-activated factor NF-AT. The protein is Protein X of Arctic squirrel hepatitis virus (ASHV).